A 117-amino-acid polypeptide reads, in one-letter code: Immunoglobulin kappa variable 1D-16 (117 aa).

The first 22 residues, 1–22 (MDMRVLAQLLGLLLLCFPGARC), serve as a signal peptide directing secretion. Positions 23–45 (DIQMTQSPSSLSASVGDRVTITC) are framework-1. In terms of domain architecture, Ig-like spans 24–117 (IQMTQSPSSL…YYCQQYNSYP (94 aa)). An intrachain disulfide couples C45 to C110. The segment at 46-56 (RASQGISSWLA) is complementarity-determining-1. A framework-2 region spans residues 57 to 71 (WYQQKPEKAPKSLIY). The segment at 72–78 (AASSLQS) is complementarity-determining-2. Positions 79–110 (GVPSRFSGSGSGTDFTLTISSLQPEDFATYYC) are framework-3. The tract at residues 111-117 (QQYNSYP) is complementarity-determining-3.

Immunoglobulins are composed of two identical heavy chains and two identical light chains; disulfide-linked.

Its subcellular location is the secreted. It is found in the cell membrane. Functionally, v region of the variable domain of immunoglobulin light chains that participates in the antigen recognition. Immunoglobulins, also known as antibodies, are membrane-bound or secreted glycoproteins produced by B lymphocytes. In the recognition phase of humoral immunity, the membrane-bound immunoglobulins serve as receptors which, upon binding of a specific antigen, trigger the clonal expansion and differentiation of B lymphocytes into immunoglobulins-secreting plasma cells. Secreted immunoglobulins mediate the effector phase of humoral immunity, which results in the elimination of bound antigens. The antigen binding site is formed by the variable domain of one heavy chain, together with that of its associated light chain. Thus, each immunoglobulin has two antigen binding sites with remarkable affinity for a particular antigen. The variable domains are assembled by a process called V-(D)-J rearrangement and can then be subjected to somatic hypermutations which, after exposure to antigen and selection, allow affinity maturation for a particular antigen. The polypeptide is Immunoglobulin kappa variable 1D-16 (Homo sapiens (Human)).